The chain runs to 97 residues: YcgL domain-containing protein APP7_0754 (97 aa).

Residues 6–90 form the YcgL domain; it reads NLCAIYKSPK…PPENLLKTFL (85 aa).

The sequence is that of YcgL domain-containing protein APP7_0754 from Actinobacillus pleuropneumoniae serotype 7 (strain AP76).